Reading from the N-terminus, the 231-residue chain is Ribosomal RNA large subunit methyltransferase E (231 aa).

S-adenosyl-L-methionine is bound by residues Gly-76, Trp-78, Asp-99, Asp-115, and Asp-139. The active-site Proton acceptor is Lys-179.

The protein belongs to the class I-like SAM-binding methyltransferase superfamily. RNA methyltransferase RlmE family.

The protein resides in the cytoplasm. It catalyses the reaction uridine(2552) in 23S rRNA + S-adenosyl-L-methionine = 2'-O-methyluridine(2552) in 23S rRNA + S-adenosyl-L-homocysteine + H(+). Its function is as follows. Specifically methylates the uridine in position 2552 of 23S rRNA at the 2'-O position of the ribose in the fully assembled 50S ribosomal subunit. The polypeptide is Ribosomal RNA large subunit methyltransferase E (Bradyrhizobium sp. (strain BTAi1 / ATCC BAA-1182)).